Consider the following 206-residue polypeptide: Large ribosomal subunit protein uL4 (206 aa).

Residues 48-97 (THAVKNRSLVSGGGKKPWKQKHTGRARQGSTRASQWVGGGKAMGPKPRDY) form a disordered region. The span at 63–72 (KPWKQKHTGR) shows a compositional bias: basic residues.

This sequence belongs to the universal ribosomal protein uL4 family. Part of the 50S ribosomal subunit.

One of the primary rRNA binding proteins, this protein initially binds near the 5'-end of the 23S rRNA. It is important during the early stages of 50S assembly. It makes multiple contacts with different domains of the 23S rRNA in the assembled 50S subunit and ribosome. Its function is as follows. Forms part of the polypeptide exit tunnel. The sequence is that of Large ribosomal subunit protein uL4 from Anaeromyxobacter dehalogenans (strain 2CP-1 / ATCC BAA-258).